Reading from the N-terminus, the 229-residue chain is Gene 1 protein (229 aa).

The sequence is that of Gene 1 protein (1) from Mycobacterium phage L5 (Mycobacteriophage L5).